A 187-amino-acid polypeptide reads, in one-letter code: TATA-box-binding protein (187 aa).

2 tandem repeats follow at residues 10-86 (IENV…FDKL) and 101-179 (VQNI…VSRL).

The protein belongs to the TBP family.

In terms of biological role, general factor that plays a role in the activation of archaeal genes transcribed by RNA polymerase. Binds specifically to the TATA box promoter element which lies close to the position of transcription initiation. The polypeptide is TATA-box-binding protein (Natronomonas pharaonis (strain ATCC 35678 / DSM 2160 / CIP 103997 / JCM 8858 / NBRC 14720 / NCIMB 2260 / Gabara) (Halobacterium pharaonis)).